The following is a 560-amino-acid chain: 2-isopropylmalate synthase (560 aa).

Residues 30–303 (PVWCSVDLRD…DPEIDCSNIE (274 aa)) enclose the Pyruvate carboxyltransferase domain. Positions 39, 242, 244, and 278 each coordinate Mg(2+). The tract at residues 437–560 (QPEGRLRFVD…RVLDVKAGKA (124 aa)) is regulatory domain.

This sequence belongs to the alpha-IPM synthase/homocitrate synthase family. LeuA type 2 subfamily. As to quaternary structure, homodimer. Mg(2+) is required as a cofactor.

It localises to the cytoplasm. It catalyses the reaction 3-methyl-2-oxobutanoate + acetyl-CoA + H2O = (2S)-2-isopropylmalate + CoA + H(+). Its pathway is amino-acid biosynthesis; L-leucine biosynthesis; L-leucine from 3-methyl-2-oxobutanoate: step 1/4. Catalyzes the condensation of the acetyl group of acetyl-CoA with 3-methyl-2-oxobutanoate (2-ketoisovalerate) to form 3-carboxy-3-hydroxy-4-methylpentanoate (2-isopropylmalate). In Rhizobium johnstonii (strain DSM 114642 / LMG 32736 / 3841) (Rhizobium leguminosarum bv. viciae), this protein is 2-isopropylmalate synthase.